The primary structure comprises 445 residues: GTPase Der (445 aa).

2 EngA-type G domains span residues 3-167 (PVIA…YAGQ) and 180-353 (IKIA…AAAM). GTP-binding positions include 9–16 (GRPNVGKS), 56–60 (DTGGF), 119–122 (NKAE), 186–193 (GRPNVGKS), 233–237 (DTAGL), and 298–301 (NKWD). One can recognise a KH-like domain in the interval 354-438 (AKLPTPKLTR…PLRIEFRSSN (85 aa)).

It belongs to the TRAFAC class TrmE-Era-EngA-EngB-Septin-like GTPase superfamily. EngA (Der) GTPase family. Associates with the 50S ribosomal subunit.

In terms of biological role, GTPase that plays an essential role in the late steps of ribosome biogenesis. This is GTPase Der from Burkholderia vietnamiensis (strain G4 / LMG 22486) (Burkholderia cepacia (strain R1808)).